We begin with the raw amino-acid sequence, 295 residues long: MRFETTVQRPVEASGVGLHSGVPVKIRILPAPVSTGVVFVRTDLDGFQIPASWRHVARVSYATSLMRQGVLISTTEHLLSVFYSMGIDNVYVEIDNLEVPILDGSGLPFVKLIAQAGIRQYRRKRRYLRIRRPISVEDKGKRISILPDEAFRLTCDTEYPAPVGRQSLELVVTPEHYASELAFARTFGWENDLDQMRNMGLIRGASLANAVCFTSEGPLNPDGLRAVDECCRHKALDLIGDLALLGRPLLGHVIAERAGHAMHAALVARIMGDPSIYEIITFDQLASRVTQALVS.

Residues histidine 77, histidine 233, and aspartate 237 each coordinate Zn(2+). Histidine 260 (proton donor) is an active-site residue.

Belongs to the LpxC family. The cofactor is Zn(2+).

It catalyses the reaction a UDP-3-O-[(3R)-3-hydroxyacyl]-N-acetyl-alpha-D-glucosamine + H2O = a UDP-3-O-[(3R)-3-hydroxyacyl]-alpha-D-glucosamine + acetate. It participates in glycolipid biosynthesis; lipid IV(A) biosynthesis; lipid IV(A) from (3R)-3-hydroxytetradecanoyl-[acyl-carrier-protein] and UDP-N-acetyl-alpha-D-glucosamine: step 2/6. Catalyzes the hydrolysis of UDP-3-O-myristoyl-N-acetylglucosamine to form UDP-3-O-myristoylglucosamine and acetate, the committed step in lipid A biosynthesis. The sequence is that of UDP-3-O-acyl-N-acetylglucosamine deacetylase from Solibacter usitatus (strain Ellin6076).